The following is a 2602-amino-acid chain: Non-reducing polyketide synthase SAT8 (2602 aa).

C130 (nucleophile; for transacylase activity) is an active-site residue. H249 serves as the catalytic Proton donor/acceptor; for transacylase activity. Positions 379–398 (MLENSTSPPSPAATSSNSHC) are disordered. Positions 382 to 396 (NSTSPPSPAATSSNS) are enriched in low complexity. The region spanning 404-822 (PRDIAIVGMS…GSNAAMVVTQ (419 aa)) is the Ketosynthase family 3 (KS3) domain. Catalysis depends on for beta-ketoacyl synthase activity residues C571, H706, and H745. Residues 926-1216 (FGGQMSTFVG…AMARRSLDSN (291 aa)) are malonyl-CoA:ACP transacylase (MAT). The segment at 1298–1442 (GPLFGLLTFV…GKLDLLSSSE (145 aa)) is N-terminal hotdog fold. The PKS/mFAS DH domain maps to 1298-1618 (GPLFGLLTFV…YTRIPRHSMT (321 aa)). Residues 1331-1616 (LVIPHIIART…IAYTRIPRHS (286 aa)) form a product template (PT) domain region. Catalysis depends on H1335, which acts as the Proton acceptor; for dehydratase activity. The C-terminal hotdog fold stretch occupies residues 1467–1618 (GDVSGLQGRS…YTRIPRHSMT (152 aa)). Residue D1524 is the Proton donor; for dehydratase activity of the active site. The Carrier domain occupies 1658-1733 (DTLKQTVGQI…AFVRYISKVV (76 aa)). The residue at position 1692 (S1692) is an O-(pantetheine 4'-phosphoryl)serine. Residues 1737–1772 (DDLGTPSHSDNDSHVTGTTATPNSSSASSDTHHGNS) are disordered. The span at 1752 to 1765 (TGTTATPNSSSASS) shows a compositional bias: low complexity. Residues 1979 to 2150 (VEKVKDDFQG…GYGHVDWTDG (172 aa)) form a methyltransferase domain region. Residues 2229-2530 (IVVVTGATGS…IPLGEWVRKV (302 aa)) are NADPH-binding domain.

Pantetheine 4'-phosphate is required as a cofactor.

It participates in mycotoxin biosynthesis. Non-reducing polyketide synthase; part of the satratoxin SC1 cluster involved in the biosynthesis of satratoxins, trichothecene mycotoxins that are associated with human food poisonings. Satratoxins are suggested to be made by products of multiple gene clusters (SC1, SC2 and SC3) that encode 21 proteins in all, including polyketide synthases, acetyltransferases, and other enzymes expected to modify the trichothecene skeleton. SC1 encodes 10 proteins, SAT1 to SAT10. The largest are SAT8, which encodes a putative polyketide synthase (PKS) with a conventional non-reducing architecture, and SAT10, a putative protein containing four ankyrin repeats and thus may be involved in protein scaffolding. The putative short-chain reductase SAT3 may assist the PKS in some capacity. SAT6 contains a secretory lipase domain and acts probably as a trichothecene esterase. SAT5 encodes a putative acetyltransferase, and so, with SAT6, may affect endogenous protection from toxicity. The probable transcription factor SAT9 may regulate the expression of the SC1 cluster. SC2 encodes proteins SAT11 to SAT16, the largest of which encodes the putative reducing PKS SAT13. SAT11 is a cytochrome P450 monooxygenase, while SAT14 and SAT16 are probable acetyltransferases. The SC2 cluster may be regulated by the transcription factor SAT15. SC3 is a small cluster that encodes 5 proteins, SAT17 to SAT21. SAT21 is a putative MFS-type transporter which may have a role in exporting secondary metabolites. The four other proteins putatively encoded in SC3 include the taurine hydroxylase-like protein SAT17, the O-methyltransferase SAT18, the acetyltransferase SAT19, and the Cys6-type zinc finger SAT20, the latter being probably involved in regulation of SC3 expression. The chain is Non-reducing polyketide synthase SAT8 from Stachybotrys chartarum (strain CBS 109288 / IBT 7711) (Toxic black mold).